The sequence spans 200 residues: Putative pseudouridine methyltransferase (200 aa).

Positions 133 and 187 each coordinate S-adenosyl-L-methionine.

It belongs to the methyltransferase superfamily. TrmY family.

The protein localises to the cytoplasm. The polypeptide is Putative pseudouridine methyltransferase (Alcanivorax borkumensis (strain ATCC 700651 / DSM 11573 / NCIMB 13689 / SK2)).